The sequence spans 1465 residues: MSDLFAKLMDQIEMPLDMRRSSAFSSADIIEVKVHSVSRLWEFHFAFAAVLPIATYRELHDRLIRTFEAADIKVTFDIQAAQVDYSDDLLQAYYQEAFEHAPCNSASFKSSFSKLKVTYEDDKLIIAAPGFVNNDHFRNNHLPNLVKQLEAFGFGILTIDMVSDQEMTEHLTKNFVSSRQALVKKAVQDNLEAQKSLEAMMPPVEEATPAPKFDYKERAAKRQAGFEKATITPMIEIETEENRIVFEGMVFDVERKTTRTGRHIINFKMTDYTSSFALQKWAKDDEELRKFDMIAKGAWLRVQGNIETNPFTKSLTMNVQQVKEIVRHERKDLMPEGQKRVELHAHTNMSTMDALPTVESLIDTAAKWGHKAIAITDHANVQSFPHGYHRARKAGIKAIFGLEANIVEDKVPISYEPVDMDLHEDLCGLSDVETTGLSAMNNDLIQIAASKMFKGNIVEQFDEFIDPGHPLSAFTTELTGITDKHLQGAKPLVTVLKAFQDFCKDSILVAHNASFDVGFMNANYERHDLPKITQPVIDTLEFARNLYPEYKRHGLGPLTKRFQVSLDHHHMANYDAEATGRLLFIFLKDAREKHGIKNLLQLNTDLVAEDSYKKARIKHATIYVQNQVGLKNMFKLVSLSNIKYFEGVPRIPRTVLDAHREGLLLGTACSDGEVFDAVLTKGIDAAVDLARYYDFIEIMPPAIYQPLVVRELIKDQAGIEQVIRDLIEVGKRAKKPVLATGNVHYLEPEEEIYREIIVRSLGQGAMINRTIGRGEGAQPAPLPKAHFRTTNEMLDEFAFLGKDLAYQVVVQNTQDFADRIEEVEVVKGDLYTPYIDKAEETVAELTYQKAFEIYGNPLPDIIDLRIEKELTSILGNGFAVIYLASQMLVNRSNERGYLVGSRGSVGSSFVATMIGITEVNPMPPHYVCPSCQHSEFITDGSVGSGYDLPNKPCPKCGTPYQKDGQDIPFETFLGFDGDKVPDIDLNFSGDDQPSAHLDVRDIFGDEYAFRAGTVGTVAEKTAYGFVKGYERDYGKFYRDAEVDRLAAGAAGVKRTTGQHPGGIVVIPNYMDVYDFTPVQYPADDVTASWQTTHFNFHDIDENVLKLDILGHDDPTMIRKLQDLSGIDPITIPADDPGVMALFSGTEVLGVTPEQIGTPTGMLGIPEFGTNFVRGMVNETHPTTFAELLQLSGLSHGTDVWLGNAQDLIKEGIATLKTVIGCRDDIMVYLMHAGLEPKMAFTIMERVRKGLWLKISEEERNGYIDAMRENNVPDWYIESCGKIKYMFPKAHAAAYVLMALRVAYFKVHHPIMYYCAYFSIRAKAFELKTMSGGLDAVKARMEDITIKRKNNEATNVENDLFTTLEIVNEMLERGFKFGKLDLYKSDAIEFQIKGDTLIPPFIALEGLGENVAKQIVKARQEGEFLSKMELRKRGGASSTLVEKMDEMGILGNMPEDNQLSLFDDFF.

Residues 431-583 (DVETTGLSAM…YDAEATGRLL (153 aa)) form the Exonuclease domain.

This sequence belongs to the DNA polymerase type-C family. PolC subfamily.

Its subcellular location is the cytoplasm. The enzyme catalyses DNA(n) + a 2'-deoxyribonucleoside 5'-triphosphate = DNA(n+1) + diphosphate. Functionally, required for replicative DNA synthesis. This DNA polymerase also exhibits 3' to 5' exonuclease activity. The protein is DNA polymerase III PolC-type of Streptococcus pyogenes.